The chain runs to 253 residues: Sulfate transporter CysZ (253 aa).

The next 4 helical transmembrane spans lie at 31-51, 72-92, 151-171, and 222-242; these read FVIL…WWLF, LSYL…GYFF, IVLL…PVLW, and IPVL…AMWV.

The protein belongs to the CysZ family.

Its subcellular location is the cell inner membrane. Its function is as follows. High affinity, high specificity proton-dependent sulfate transporter, which mediates sulfate uptake. Provides the sulfur source for the cysteine synthesis pathway. The polypeptide is Sulfate transporter CysZ (Salmonella paratyphi A (strain AKU_12601)).